The sequence spans 247 residues: Neurotrophic factor BDNF precursor form (247 aa).

Positions Met1–Ala18 are cleaved as a signal peptide. Residues Ala19–Arg128 constitute a propeptide that is removed on maturation. Residue Asn121 is glycosylated (N-linked (GlcNAc...) asparagine). 3 disulfide bridges follow: Cys141/Cys208, Cys186/Cys237, and Cys196/Cys239.

This sequence belongs to the NGF-beta family. In terms of assembly, monomers and homodimers. Binds to NTRK2/TRKB. Can form heterodimers with other neurotrophin family members, such as NTF3 and NTF4 (in vitro), but the physiological relevance of this is not clear. BDNF precursor form: interacts with the heterodimer formed by NGFR and SORCS2. Mature BDNF has much lower affinity for the heterodimer formed by NGFR and SORCS2. In terms of processing, N-glycosylated and glycosulfated, contrary to mature BDNF. Post-translationally, mature BDNF is produced by proteolytic removal of the propeptide, catalyzed by a FURIN family member. In addition, the precursor form is proteolytically cleaved within the propeptide, but this is not an obligatory intermediate for the production of mature BDNF. Can be converted into mature BDNF by plasmin (PLG).

It localises to the secreted. In terms of biological role, important signaling molecule that activates signaling cascades downstream of NTRK2. During development, promotes the survival and differentiation of selected neuronal populations of the peripheral and central nervous systems. Participates in axonal growth, pathfinding and in the modulation of dendritic growth and morphology. Major regulator of synaptic transmission and plasticity at adult synapses in many regions of the CNS. The versatility of BDNF is emphasized by its contribution to a range of adaptive neuronal responses including long-term potentiation (LTP), long-term depression (LTD), certain forms of short-term synaptic plasticity, as well as homeostatic regulation of intrinsic neuronal excitability. Functionally, important signaling molecule that activates signaling cascades downstream of NTRK2. Activates signaling cascades via the heterodimeric receptor formed by NGFR and SORCS2. Signaling via NGFR and SORCS2 plays a role in synaptic plasticity and long-term depression (LTD). Binding to NGFR and SORCS2 promotes neuronal apoptosis. Promotes neuronal growth cone collapse. The protein is Neurotrophic factor BDNF precursor form (BDNF) of Ailurus fulgens (Himalayan red panda).